The chain runs to 319 residues: Pantothenate kinase (319 aa).

101 to 108 (GSVAVGKS) contacts ATP.

Belongs to the prokaryotic pantothenate kinase family.

It localises to the cytoplasm. The catalysed reaction is (R)-pantothenate + ATP = (R)-4'-phosphopantothenate + ADP + H(+). Its pathway is cofactor biosynthesis; coenzyme A biosynthesis; CoA from (R)-pantothenate: step 1/5. This chain is Pantothenate kinase, found in Clavibacter sepedonicus (Clavibacter michiganensis subsp. sepedonicus).